Consider the following 1048-residue polypeptide: uncharacterized protein (1048 aa).

The tract at residues 601–629 (ENQINEEQQTNVENEQQTEQQFENEDKET) is disordered. Residues 605–621 (NEEQQTNVENEQQTEQQ) are compositionally biased toward low complexity.

This is an uncharacterized protein from Methanocaldococcus jannaschii (strain ATCC 43067 / DSM 2661 / JAL-1 / JCM 10045 / NBRC 100440) (Methanococcus jannaschii).